We begin with the raw amino-acid sequence, 67 residues long: UPF0337 protein BCE_3655 (67 aa).

This sequence belongs to the UPF0337 (CsbD) family.

The polypeptide is UPF0337 protein BCE_3655 (Bacillus cereus (strain ATCC 10987 / NRS 248)).